The sequence spans 126 residues: Holo-[acyl-carrier-protein] synthase (126 aa).

The Mg(2+) site is built by aspartate 9 and glutamate 58.

It belongs to the P-Pant transferase superfamily. AcpS family. Mg(2+) serves as cofactor.

It is found in the cytoplasm. The catalysed reaction is apo-[ACP] + CoA = holo-[ACP] + adenosine 3',5'-bisphosphate + H(+). In terms of biological role, transfers the 4'-phosphopantetheine moiety from coenzyme A to a Ser of acyl-carrier-protein. The polypeptide is Holo-[acyl-carrier-protein] synthase (Vibrio campbellii (strain ATCC BAA-1116)).